The sequence spans 425 residues: Ribulose bisphosphate carboxylase/oxygenase activase B, chloroplastic (425 aa).

A chloroplast-targeting transit peptide spans 1 to 43 (MASAFSSTVGAPASTPTIFLGKKVKNYYHGGNKMKSRVVRVMA). 153 to 160 (GGKGQGKS) is a binding site for ATP.

Belongs to the RuBisCO activase family.

It is found in the plastid. It localises to the chloroplast stroma. Functionally, activation of RuBisCO (ribulose-1,5-bisphosphate carboxylase/oxygenase; EC 4.1.1.39) involves the ATP-dependent carboxylation of the epsilon-amino group of lysine leading to a carbamate structure. The chain is Ribulose bisphosphate carboxylase/oxygenase activase B, chloroplastic (RCAB) from Hordeum vulgare (Barley).